The sequence spans 1103 residues: Activity-dependent neuroprotector homeobox protein (1103 aa).

Glycyl lysine isopeptide (Lys-Gly) (interchain with G-Cter in SUMO2) cross-links involve residues lysine 39 and lysine 72. The segment at 74 to 97 (FCCSACPFSSKFFSAYKSHFRNVH) adopts a C2H2-type 1; degenerate zinc-finger fold. Phosphoserine is present on serine 98. The segment at 107-129 (LNCPYCTFNADKKTLETHIKIFH) adopts a C2H2-type 2; degenerate zinc-finger fold. The tract at residues 133-154 (SSAPSSSLSTFKDKNKNDGLKP) is disordered. Over residues 143–154 (FKDKNKNDGLKP) the composition is skewed to basic and acidic residues. Glycyl lysine isopeptide (Lys-Gly) (interchain with G-Cter in SUMO2) cross-links involve residues lysine 144 and lysine 155. Residues 165 to 188 (YYCKKCTYRDPLYEIVRKHIYREH) form a C2H2-type 3; degenerate zinc finger. Residues lysine 203, lysine 231, lysine 266, lysine 274, lysine 278, lysine 279, lysine 311, and lysine 335 each participate in a glycyl lysine isopeptide (Lys-Gly) (interchain with G-Cter in SUMO2) cross-link. The C2H2-type 4; degenerate zinc-finger motif lies at 221–244 (IHCKRCLFMPKSYEALVQHVIEDH). Arginine 348 bears the Asymmetric dimethylarginine mark. The interval 354 to 361 (NAPVSIPQ) is neuroprotective peptide (NAP). The segment at 360–439 (PQQSQSVKQL…PAATGPPPSN (80 aa)) is disordered. Glycyl lysine isopeptide (Lys-Gly) (interchain with G-Cter in SUMO2) cross-links involve residues lysine 367 and lysine 408. The segment covering 393 to 423 (SLQTANTSSLPPGQVKSPSVSQSQASRVLGQ) has biased composition (polar residues). 2 positions are modified to phosphoserine: serine 409 and serine 413. Lysine 427 is covalently cross-linked (Glycyl lysine isopeptide (Lys-Gly) (interchain with G-Cter in SUMO2)). Residues 427 to 438 (KPPPAATGPPPS) are compositionally biased toward pro residues. A C2H2-type 5; atypical zinc finger spans residues 447 to 469 (KICTICNELFPENVYSVHFEKEH). 2 C2H2-type zinc fingers span residues 489 to 510 (SKCL…MLIH) and 512 to 535 (LSCP…RMVH). Residues lysine 600 and lysine 606 each participate in a glycyl lysine isopeptide (Lys-Gly) (interchain with G-Cter in SUMO2) cross-link. Serine 608 carries the phosphoserine modification. Glycyl lysine isopeptide (Lys-Gly) (interchain with G-Cter in SUMO2) cross-links involve residues lysine 616, lysine 621, lysine 632, and lysine 658. The C2H2-type 8; atypical zinc finger occupies 622–647 (TLCPLCFSILKGPISDALAHHLRERH). The C2H2-type 9; atypical zinc-finger motif lies at 662 to 686 (YKCIHCLGVYTSNMTASTITLHLVH). Residues 691-712 (GKTQNGQDKTNAPSRLNQSPGL) form a disordered region. The span at 692–710 (KTQNGQDKTNAPSRLNQSP) shows a compositional bias: polar residues. Lysine 699 is covalently cross-linked (Glycyl lysine isopeptide (Lys-Gly) (interchain with G-Cter in SUMO2)). Residue serine 709 is modified to Phosphoserine. Residues lysine 716, lysine 728, and lysine 731 each participate in a glycyl lysine isopeptide (Lys-Gly) (interchain with G-Cter in SUMO2) cross-link. Serine 738 is modified (phosphoserine). Lysine 745 is covalently cross-linked (Glycyl lysine isopeptide (Lys-Gly) (interchain with G-Cter in SUMO2)). The segment at residues 754–814 (LDPKGHEDDS…SNKRKKCVRD (61 aa)) is a DNA-binding region (homeobox). Position 805 is a phosphoserine (serine 805). Glycyl lysine isopeptide (Lys-Gly) (interchain with G-Cter in SUMO2) cross-links involve residues lysine 807, lysine 829, and lysine 835. The disordered stretch occupies residues 873–1029 (DSFSDSFEHL…VQDDTEQLKW (157 aa)). Serine 876, serine 878, serine 886, serine 889, and serine 905 each carry phosphoserine. Glycyl lysine isopeptide (Lys-Gly) (interchain with G-Cter in SUMO2) cross-links involve residues lysine 914, lysine 929, and lysine 936. Positions 922-954 (ESEKLDQKEEEDGSKYETIHLTEERAKLMHDAS) are enriched in basic and acidic residues. Residues serine 954 and serine 956 each carry the phosphoserine modification. Polar residues predominate over residues 972–982 (PSESGPGSRQV). Lysine 1017 is covalently cross-linked (Glycyl lysine isopeptide (Lys-Gly) (interchain with G-Cter in SUMO2)). N6-acetyllysine; alternate is present on residues lysine 1036 and lysine 1043. Glycyl lysine isopeptide (Lys-Gly) (interchain with G-Cter in SUMO2); alternate cross-links involve residues lysine 1036 and lysine 1043. Residues 1045–1103 (QSQWENASENAERLPNPQIEWQNSTIDSEDGEQFDSMTDGVADPMHGSLTGVKLSSQQA) form a disordered region. Phosphoserine is present on serine 1072.

In terms of assembly, interacts (via N-terminal region) with beta-catenin/CTNNB1 (via the central armadillo domains); interaction is direct and stabilizes CTNNB1 by modulating its phosphorylation by glycogen synthase kinase-3 beta GSK3B.

It is found in the nucleus. The protein localises to the chromosome. Its function is as follows. May be involved in transcriptional regulation. May mediate some of the neuroprotective peptide VIP-associated effects involving normal growth and cancer proliferation. Positively modulates WNT-beta-catenin/CTNN1B signaling, acting by regulating phosphorylation of, and thereby stabilizing, CTNNB1. May be required for neural induction and neuronal differentiation. May be involved in erythroid differentiation. This Rattus norvegicus (Rat) protein is Activity-dependent neuroprotector homeobox protein (Adnp).